We begin with the raw amino-acid sequence, 205 residues long: Outer-membrane lipoprotein LolB (205 aa).

An N-terminal signal peptide occupies residues 1–17 (MFLRHFIVFSFIALLAG). C18 is lipidated: N-palmitoyl cysteine. The S-diacylglycerol cysteine moiety is linked to residue C18.

The protein belongs to the LolB family. Monomer.

Its subcellular location is the cell outer membrane. Functionally, plays a critical role in the incorporation of lipoproteins in the outer membrane after they are released by the LolA protein. The polypeptide is Outer-membrane lipoprotein LolB (Pseudomonas fluorescens (strain ATCC BAA-477 / NRRL B-23932 / Pf-5)).